The sequence spans 917 residues: Isoleucine--tRNA ligase (917 aa).

The short motif at 57–67 (PYANGNLHMGH) is the 'HIGH' region element. Glutamate 554 contacts L-isoleucyl-5'-AMP. Positions 595-599 (KMSKS) match the 'KMSKS' region motif. Lysine 598 contacts ATP. Cysteine 886, cysteine 889, cysteine 906, and cysteine 909 together coordinate Zn(2+).

The protein belongs to the class-I aminoacyl-tRNA synthetase family. IleS type 1 subfamily. As to quaternary structure, monomer. The cofactor is Zn(2+).

Its subcellular location is the cytoplasm. The enzyme catalyses tRNA(Ile) + L-isoleucine + ATP = L-isoleucyl-tRNA(Ile) + AMP + diphosphate. In terms of biological role, catalyzes the attachment of isoleucine to tRNA(Ile). As IleRS can inadvertently accommodate and process structurally similar amino acids such as valine, to avoid such errors it has two additional distinct tRNA(Ile)-dependent editing activities. One activity is designated as 'pretransfer' editing and involves the hydrolysis of activated Val-AMP. The other activity is designated 'posttransfer' editing and involves deacylation of mischarged Val-tRNA(Ile). The protein is Isoleucine--tRNA ligase (ileS) of Staphylococcus aureus (strain MSSA476).